Reading from the N-terminus, the 354-residue chain is Chaperone protein dnaJ 49 (354 aa).

One can recognise a J domain in the interval 99 to 163; sequence DYYAILGLEK…NSRRQFDQVG (65 aa). The helical transmembrane segment at 237–257 threads the bilayer; sequence CLTIIQILPFFLLLLLAYLPF.

Belongs to the DnaJ family. C/III subfamily.

The protein localises to the membrane. In terms of biological role, plays a continuous role in plant development probably in the structural organization of compartments. This Arabidopsis thaliana (Mouse-ear cress) protein is Chaperone protein dnaJ 49 (ATJ49).